The following is a 340-amino-acid chain: N-acetyl-gamma-glutamyl-phosphate reductase (340 aa).

C149 is a catalytic residue.

It belongs to the NAGSA dehydrogenase family. Type 1 subfamily.

The protein localises to the cytoplasm. It carries out the reaction N-acetyl-L-glutamate 5-semialdehyde + phosphate + NADP(+) = N-acetyl-L-glutamyl 5-phosphate + NADPH + H(+). Its pathway is amino-acid biosynthesis; L-arginine biosynthesis; N(2)-acetyl-L-ornithine from L-glutamate: step 3/4. Functionally, catalyzes the NADPH-dependent reduction of N-acetyl-5-glutamyl phosphate to yield N-acetyl-L-glutamate 5-semialdehyde. This is N-acetyl-gamma-glutamyl-phosphate reductase from Ruthia magnifica subsp. Calyptogena magnifica.